A 699-amino-acid polypeptide reads, in one-letter code: MSDDERDDWPVQDIVYTSIVGVVMLAAVLEWFLWIAAFLYCLWKVFVKAEHWTIRVLSVVVALLFTALRSIFLPIMVVTLPLPAAVVEVWPPGMVEVLQWFGFWCFAGLLTVPWLFCIYQLVTNQLGRTKRIKQVLDEVSAPKVVIVMPCYKEEPDILVKAVDSVVDCDYPPSCIHVFLSFDGDQEDELYLRTIESLGISLTLESYPKSIDVTYKEARITVSRFPHGGKRHCQKATFELIDKVYRHYLQRNDNLFILFIDSDCILDRHCLQNFVYDMELSPGNRRDMLAMTGVITSTTRKHSLITILQDMEYVHGQLFERTVESGCGSVTCLPGALTMLRFSAFRRMAKYYFADKAEQCDDLFDFAKCHLGEDRWLTHLFMIGAKKRYQIQMCTSAFCKTEAAQTTKSLIKQRRRWFLGFITNEACMLTDWRLWKRYPVLIFVRFMQNTIRTTALLFFIMVLAIITTSKKVDQLPVGFIAVSLGLNWLLMIYFGAKLKRFKVWLYPVMFVVNPFFNWFYMVYGIFTAGQRTWGGPRADAAEASSGATAQEAIEQAEKAGDDLNIVPEMFVRAAAARRRSLNKGNQGGGLGRKTSVVRPPDKIDGRFTARNQLHGGFFTHGDESLDSIAAGGSGEASEPGTRWAPDPRESFDSTLYSQTYGNYGVPPRRLESIMDDEDRKKFELAQQSQSYTILRPARIV.

6 helical membrane-spanning segments follow: residues 19–39 (IVGV…AAFL), 58–80 (SVVV…VVTL), 98–118 (LQWF…LFCI), 445–465 (FMQN…LAII), 474–494 (LPVG…IYFG), and 507–527 (VMFV…IFTA). The disordered stretch occupies residues 628–648 (AAGGSGEASEPGTRWAPDPRE).

It belongs to the chitin synthase family. Class VI subfamily.

The protein resides in the cell membrane. The enzyme catalyses [(1-&gt;4)-N-acetyl-beta-D-glucosaminyl](n) + UDP-N-acetyl-alpha-D-glucosamine = [(1-&gt;4)-N-acetyl-beta-D-glucosaminyl](n+1) + UDP + H(+). In terms of biological role, polymerizes chitin, a structural polymer of the cell wall and septum, by transferring the sugar moiety of UDP-GlcNAc to the non-reducing end of the growing chitin polymer. Plays a role in cell wall integrity. Required to successfully penetrate the host plants and thus plays a key role in pathogenicity. This Verticillium dahliae (strain VdLs.17 / ATCC MYA-4575 / FGSC 10137) (Verticillium wilt) protein is Chitin synthase 7.